A 284-amino-acid chain; its full sequence is Bifunctional protein FolD 2 (284 aa).

NADP(+) contacts are provided by residues 166 to 168 and Ile-232; that span reads GAS.

It belongs to the tetrahydrofolate dehydrogenase/cyclohydrolase family. Homodimer.

It carries out the reaction (6R)-5,10-methylene-5,6,7,8-tetrahydrofolate + NADP(+) = (6R)-5,10-methenyltetrahydrofolate + NADPH. The catalysed reaction is (6R)-5,10-methenyltetrahydrofolate + H2O = (6R)-10-formyltetrahydrofolate + H(+). Its pathway is one-carbon metabolism; tetrahydrofolate interconversion. Its function is as follows. Catalyzes the oxidation of 5,10-methylenetetrahydrofolate to 5,10-methenyltetrahydrofolate and then the hydrolysis of 5,10-methenyltetrahydrofolate to 10-formyltetrahydrofolate. The protein is Bifunctional protein FolD 2 of Pseudomonas putida (strain ATCC 47054 / DSM 6125 / CFBP 8728 / NCIMB 11950 / KT2440).